The primary structure comprises 354 residues: Protein angel (354 aa).

Positions 22-59 (VSSQAKGASGKRKQKAKEMESSHDRNRRWTSLGNQAEG) are disordered.

The protein belongs to the CCR4/nocturin family. Ubiquitously expressed in embryos.

In Drosophila melanogaster (Fruit fly), this protein is Protein angel (angel).